A 596-amino-acid chain; its full sequence is MATLSMQVSTLSKQVKNLNTFGMGSASKLPMVARRVSTTRLRPICSASLQVEEETRRSGNYQAPVWNNDFIQSFSTDKYKDEKFLKKKEELIAQVKVLLNTKMEAVKQLELIEDLRNLGLTYYFEDEFKKILTSIYNEHKGFKNEQVGDLYFTSLAFRLLRLHGFDVSEDVFNFFKNEDGSDFKASLGENTKDVLELYEASFLIRVGEVTLEQARVFSTKILEKKVEEGIKDEKLLAWIQHSLALPLHWRIQRLEARWFLDAYKARKDMNPIIYELGKIDFHIIQETQLQEVQEVSQWWTNTNLAEKLPFVRDRIVECYFWALGLFEPHEYGYQRKMAAIIITFVTIIDDVYDVYGTLDELQLFTDAIRKWDVESISTLPYYMQVCYLAVFTYASELAYDILKDQGFNSISYLQRSWLSLVEGFFQEAKWYYAGYTPTLAEYLENAKVSISSPTIISQVYFTLPNSTERTVVENVFGYHNILYLSGMILRLADDLGTTQFELKRGDVQKAIQCYMNDNNATEEEGTEHVKYLLREAWQEMNSAMADPDCPLSEDLVFAAANLGRASQFIYLDGDGHGVQHSEIHNQMGGLIFEPYV.

A chloroplast-targeting transit peptide spans 1 to 46 (MATLSMQVSTLSKQVKNLNTFGMGSASKLPMVARRVSTTRLRPICS). Mn(2+) is bound by residues Asp-349 and Asp-353. The short motif at 349–353 (DDVYD) is the DDXXD motif element. Homodimerization stretches follow at residues 355-361 (YGTLDEL) and 427-464 (EAKW…FTLP). Residues Asp-493 and Glu-501 each coordinate Mn(2+).

It belongs to the terpene synthase family. In terms of assembly, homodimer. Mn(2+) is required as a cofactor. It depends on Mg(2+) as a cofactor.

Its subcellular location is the plastid. It is found in the chloroplast. It participates in secondary metabolite biosynthesis; terpenoid biosynthesis. In terms of biological role, putative monoterpene synthase inactive on geranyl diphosphate (GPP). The chain is Putative terpene synthase 2, chloroplastic from Thymus vulgaris (Thyme).